Here is a 700-residue protein sequence, read N- to C-terminus: Small ribosomal subunit protein uS3c (700 aa).

2 insert regions span residues 88-196 and 282-587; these read NCHM…LGKF and KPCT…FQTR.

This sequence belongs to the universal ribosomal protein uS3 family. In terms of assembly, part of the 30S ribosomal subunit.

It is found in the plastid. The protein resides in the chloroplast. The polypeptide is Small ribosomal subunit protein uS3c (rps3) (Tetradesmus obliquus (Green alga)).